A 113-amino-acid polypeptide reads, in one-letter code: Large ribosomal subunit protein uL22 (113 aa).

Belongs to the universal ribosomal protein uL22 family. In terms of assembly, part of the 50S ribosomal subunit.

Functionally, this protein binds specifically to 23S rRNA; its binding is stimulated by other ribosomal proteins, e.g. L4, L17, and L20. It is important during the early stages of 50S assembly. It makes multiple contacts with different domains of the 23S rRNA in the assembled 50S subunit and ribosome. The globular domain of the protein is located near the polypeptide exit tunnel on the outside of the subunit, while an extended beta-hairpin is found that lines the wall of the exit tunnel in the center of the 70S ribosome. The chain is Large ribosomal subunit protein uL22 from Xylella fastidiosa (strain M12).